The primary structure comprises 316 residues: N-acetylmuramic acid 6-phosphate etherase (316 aa).

Residues 1-25 form a disordered region; it reads MAVFDPDLQPSSDRGHLLTEQSNQR. In terms of domain architecture, SIS spans 66-229; the sequence is VANRLRAGGR…STAVMVKLGK (164 aa). Catalysis depends on glutamate 94, which acts as the Proton donor. Glutamate 125 is a catalytic residue.

Belongs to the GCKR-like family. MurNAc-6-P etherase subfamily. In terms of assembly, homodimer.

The catalysed reaction is N-acetyl-D-muramate 6-phosphate + H2O = N-acetyl-D-glucosamine 6-phosphate + (R)-lactate. Its pathway is amino-sugar metabolism; N-acetylmuramate degradation. Its function is as follows. Specifically catalyzes the cleavage of the D-lactyl ether substituent of MurNAc 6-phosphate, producing GlcNAc 6-phosphate and D-lactate. The protein is N-acetylmuramic acid 6-phosphate etherase of Synechococcus sp. (strain CC9605).